A 122-amino-acid polypeptide reads, in one-letter code: Large ribosomal subunit protein uL14 (122 aa).

The protein belongs to the universal ribosomal protein uL14 family. As to quaternary structure, part of the 50S ribosomal subunit. Forms a cluster with proteins L3 and L19. In the 70S ribosome, L14 and L19 interact and together make contacts with the 16S rRNA in bridges B5 and B8.

Functionally, binds to 23S rRNA. Forms part of two intersubunit bridges in the 70S ribosome. This Alkaliphilus oremlandii (strain OhILAs) (Clostridium oremlandii (strain OhILAs)) protein is Large ribosomal subunit protein uL14.